The following is a 217-amino-acid chain: Probable glutathione S-transferase DHAR4 (217 aa).

Residues Lys-8 and Asp-19 each contribute to the glutathione site. L-ascorbate-binding residues include Lys-8 and Asp-19. Residues Ala-10–Lys-85 enclose the GST N-terminal domain. The active-site Nucleophile is Cys-20. The short motif at Cys-20 to Arg-25 is the Glutathione-binding element. Positions 47, 75, 164, and 211 each coordinate glutathione. The GST C-terminal domain maps to Tyr-86–Val-217. Lys-214 provides a ligand contact to L-ascorbate.

The protein belongs to the GST superfamily. DHAR family. Monomer.

The protein localises to the cytoplasm. It localises to the cytosol. The enzyme catalyses RX + glutathione = an S-substituted glutathione + a halide anion + H(+). It carries out the reaction L-dehydroascorbate + 2 glutathione = glutathione disulfide + L-ascorbate. Functionally, exhibits glutathione-dependent thiol transferase and dehydroascorbate (DHA) reductase activities. This Arabidopsis thaliana (Mouse-ear cress) protein is Probable glutathione S-transferase DHAR4 (DHAR4).